Here is a 322-residue protein sequence, read N- to C-terminus: Cytochrome c biogenesis protein CcsA (322 aa).

The next 7 membrane-spanning stretches (helical) occupy residues 9-29 (IFTHISFSIVSIVIIIHLITL), 44-64 (GMIVTFLCLTGLLITRWIYSG), 71-91 (LYESLIFLSWSFSLIHIVPYF), 143-163 (MILSYAALLCGSLLSVALLVI), 226-246 (VISLGFIFLTIGILSGAVWAN), 255-275 (WDPKETWAFITWIVFAIYLHI), and 287-307 (AIVATLGFLIIWICYFGVNLL).

It belongs to the CcmF/CycK/Ccl1/NrfE/CcsA family. In terms of assembly, may interact with Ccs1.

It localises to the plastid. Its subcellular location is the chloroplast thylakoid membrane. Required during biogenesis of c-type cytochromes (cytochrome c6 and cytochrome f) at the step of heme attachment. This is Cytochrome c biogenesis protein CcsA from Lactuca sativa (Garden lettuce).